A 153-amino-acid polypeptide reads, in one-letter code: MKHIEIYTDGSCLGNPGPGGYGAVLLFNQHSKELSQGFVHTTNNRMELLATIEALASLTETCKVDLTTDSQYVKNGINQWIKNWRKNGWRTSDKKPVKNVDLWKRLDEQVGRHDVKWHWVKGHSGHPMNERCDVLARDAASGKSLLPDEGFQG.

Residues 1-141 (MKHIEIYTDG…CDVLARDAAS (141 aa)) enclose the RNase H type-1 domain. Residues Asp-9, Glu-47, Asp-69, and Asp-133 each contribute to the Mg(2+) site.

This sequence belongs to the RNase H family. In terms of assembly, monomer. Mg(2+) is required as a cofactor.

Its subcellular location is the cytoplasm. The catalysed reaction is Endonucleolytic cleavage to 5'-phosphomonoester.. Endonuclease that specifically degrades the RNA of RNA-DNA hybrids. The protein is Ribonuclease H of Pseudoalteromonas atlantica (strain T6c / ATCC BAA-1087).